Here is a 494-residue protein sequence, read N- to C-terminus: tRNA-2-methylthio-N(6)-dimethylallyladenosine synthase (494 aa).

The region spanning 5 to 121 (RTYQVRTYGC…LPALLERARV (117 aa)) is the MTTase N-terminal domain. [4Fe-4S] cluster is bound by residues C14, C50, C84, C158, C162, and C165. One can recognise a Radical SAM core domain in the interval 144-374 (RESVYAAWVA…LELQERISEE (231 aa)). One can recognise a TRAM domain in the interval 377-446 (AKFVGREVEV…PHHLVADSGI (70 aa)). Residues 458-468 (WEARNAPERRP) are compositionally biased toward basic and acidic residues. Residues 458–494 (WEARNAPERRPTGVLLGMPKVGAPEPQPSVVGGCCDS) form a disordered region.

The protein belongs to the methylthiotransferase family. MiaB subfamily. As to quaternary structure, monomer. It depends on [4Fe-4S] cluster as a cofactor.

The protein localises to the cytoplasm. The enzyme catalyses N(6)-dimethylallyladenosine(37) in tRNA + (sulfur carrier)-SH + AH2 + 2 S-adenosyl-L-methionine = 2-methylsulfanyl-N(6)-dimethylallyladenosine(37) in tRNA + (sulfur carrier)-H + 5'-deoxyadenosine + L-methionine + A + S-adenosyl-L-homocysteine + 2 H(+). Functionally, catalyzes the methylthiolation of N6-(dimethylallyl)adenosine (i(6)A), leading to the formation of 2-methylthio-N6-(dimethylallyl)adenosine (ms(2)i(6)A) at position 37 in tRNAs that read codons beginning with uridine. This is tRNA-2-methylthio-N(6)-dimethylallyladenosine synthase from Thermobifida fusca (strain YX).